Reading from the N-terminus, the 553-residue chain is uncharacterized protein (553 aa).

Helical transmembrane passes span 13–30 (ALQA…GLGL), 37–59 (GISL…GLSI), 69–91 (SFGL…FSSF), 98–120 (LNML…SYTT), and 157–179 (TPAL…AVLL). RCK C-terminal domains follow at residues 190-273 (LEVQ…LFGE) and 281-365 (KEDI…VLGN). A run of 6 helical transmembrane segments spans residues 375–397 (LVAV…SIPG), 402–424 (VRLG…GPRL), 436–458 (LMLR…GAHF), 468–490 (LLWI…FFAF), 497–514 (FGSV…PMAL), and 529–551 (AYAT…LLMF).

Belongs to the AAE transporter (TC 2.A.81) family.

It is found in the cell membrane. This is an uncharacterized protein from Bacteroides fragilis (strain YCH46).